The primary structure comprises 255 residues: 5'-nucleotidase SurE (255 aa).

Residues Asp-8, Asp-9, Ser-40, and Asn-93 each contribute to the a divalent metal cation site.

It belongs to the SurE nucleotidase family. A divalent metal cation is required as a cofactor.

The protein resides in the cytoplasm. The enzyme catalyses a ribonucleoside 5'-phosphate + H2O = a ribonucleoside + phosphate. Functionally, nucleotidase that shows phosphatase activity on nucleoside 5'-monophosphates. The chain is 5'-nucleotidase SurE from Bradyrhizobium sp. (strain ORS 278).